Consider the following 81-residue polypeptide: Short neurotoxin 2 (81 aa).

The N-terminal stretch at 1–21 is a signal peptide; that stretch reads MKTLLLTLVVVTIVCLDLGYT. 4 cysteine pairs are disulfide-bonded: C24–C43, C38–C60, C62–C73, and C74–C79.

It belongs to the three-finger toxin family. Short-chain subfamily. Type I alpha-neurotoxin sub-subfamily. In terms of tissue distribution, expressed by the venom gland.

Its subcellular location is the secreted. Functionally, binds to muscle nicotinic acetylcholine receptor (nAChR) and inhibit acetylcholine from binding to the receptor, thereby impairing neuromuscular transmission. The sequence is that of Short neurotoxin 2 from Drysdalia coronoides (White-lipped snake).